We begin with the raw amino-acid sequence, 408 residues long: Homogentisate geranylgeranyltransferase (408 aa).

A chloroplast-targeting transit peptide spans M1–R68. Transmembrane regions (helical) follow at residues H122–I142, V149–G169, S194–I214, G217–I237, A248–F268, L286–I306, V329–A349, T352–W372, and V386–F406.

The protein belongs to the UbiA prenyltransferase family.

Its subcellular location is the plastid. It localises to the chloroplast membrane. It carries out the reaction homogentisate + (2E,6E,10E)-geranylgeranyl diphosphate + H(+) = 6-geranylgeranyl-2-methylbenzene-1,4-diol + CO2 + diphosphate. It participates in cofactor biosynthesis; tocopherol biosynthesis. Functionally, involved in the synthesis of tocotrienol (vitamin E). Catalyzes the condensation of homogentisate and geranylgeranyl diphosphate to form 2-methyl-6-geranylgeranylbenzoquinol. Possesses low activity with phytyl diphosphate as substrate. The polypeptide is Homogentisate geranylgeranyltransferase (Triticum aestivum (Wheat)).